We begin with the raw amino-acid sequence, 173 residues long: Photosystem I assembly protein Ycf3 (173 aa).

TPR repeat units lie at residues 35–68 (AYIY…EENP), 72–105 (GETL…NPKQ), and 120–153 (GRSA…YPGG).

It belongs to the Ycf3 family.

It localises to the cellular thylakoid membrane. Its function is as follows. Essential for the assembly of the photosystem I (PSI) complex. May act as a chaperone-like factor to guide the assembly of the PSI subunits. The sequence is that of Photosystem I assembly protein Ycf3 from Prochlorococcus marinus (strain MIT 9211).